Consider the following 417-residue polypeptide: UDP-N-acetylmuramoylalanine--D-glutamate ligase (417 aa).

108-114 provides a ligand contact to ATP; that stretch reads GSNGKTT.

It belongs to the MurCDEF family.

The protein resides in the cytoplasm. It carries out the reaction UDP-N-acetyl-alpha-D-muramoyl-L-alanine + D-glutamate + ATP = UDP-N-acetyl-alpha-D-muramoyl-L-alanyl-D-glutamate + ADP + phosphate + H(+). It functions in the pathway cell wall biogenesis; peptidoglycan biosynthesis. Its function is as follows. Cell wall formation. Catalyzes the addition of glutamate to the nucleotide precursor UDP-N-acetylmuramoyl-L-alanine (UMA). The polypeptide is UDP-N-acetylmuramoylalanine--D-glutamate ligase (Chlamydia pneumoniae (Chlamydophila pneumoniae)).